Consider the following 308-residue polypeptide: Ceramide synthase 1 LOH3 (308 aa).

A run of 6 helical transmembrane segments spans residues 25–45 (VLPL…RFVF), 82–102 (CVYY…EPWF), 128–148 (LLYM…VFWE), 154–174 (FGVS…SYVC), 213–233 (FILF…FWIL), and 258–278 (YMFN…WVLM). One can recognise a TLC domain in the interval 73–287 (RKFKESAWKC…MYRMLVKQIQ (215 aa)). Residues serine 298 and serine 300 each carry the phosphoserine modification.

In terms of tissue distribution, expressed ubiquitously at low levels. Not observed in pollen.

The protein resides in the endoplasmic reticulum membrane. The enzyme catalyses (4R)-hydroxysphinganine + a fatty acyl-CoA = an N-acyl-(4R)-4-hydroxysphinganine + CoA + H(+). It carries out the reaction a sphingoid base + tetracosanoyl-CoA = an N-tetracosanoyl-sphingoid base + CoA + H(+). The catalysed reaction is (4R)-hydroxysphinganine + hexadecanoyl-CoA = N-hexadecanoyl-(4R)-hydroxysphinganine + CoA + H(+). It catalyses the reaction (4R)-hydroxysphinganine + octadecanoyl-CoA = N-octadecanoyl-(4R)-hydroxysphinganine + CoA + H(+). The enzyme catalyses (4R)-hydroxysphinganine + eicosanoyl-CoA = N-eicosanoyl-(4R)-hydroxysphinganine + CoA + H(+). It carries out the reaction docosanoyl-CoA + (4R)-hydroxysphinganine = N-docosanoyl-(4R)-hydroxysphinganine + CoA + H(+). The catalysed reaction is hexacosanoyl-CoA + (4R)-hydroxysphinganine = N-hexacosanoyl-(4R)-hydroxysphinganine + CoA + H(+). It catalyses the reaction tetracosanoyl-CoA + (4R)-hydroxysphinganine = N-tetracosanoyl-(4R)-hydroxysphinganine + CoA + H(+). The enzyme catalyses tetracosanoyl-CoA + sphing-4-enine = N-tetracosanoyl-sphing-4-enine + CoA + H(+). It carries out the reaction sphinga-(4E,8Z)-dienine + tetracosanoyl-CoA = N-tetracosanoylsphinga-(4E,8Z)-dienine + CoA + H(+). The catalysed reaction is sphinga-(4E,8E)-dienine + tetracosanoyl-CoA = N-tetracosanoylsphinga-(4E,8E)-dienine + CoA + H(+). It catalyses the reaction (4R)-hydroxysphing-(8Z)-enine + tetracosanoyl-CoA = N-tetracosanoyl-(4R)-hydroxysphing-(8Z)-enine + CoA + H(+). The enzyme catalyses (4R)-hydroxysphing-(8E)-enine + tetracosanoyl-CoA = N-tetracosanoyl-(4R)-hydroxysphing-(8E)-enine + CoA + H(+). Its pathway is sphingolipid metabolism. Inhibited by the mycotoxin fumonisin B(1), a sphingosine analog mycotoxins produced by pathogenic fungi. Repressed by divalent cation such as magnesium Mg(2+), copper Cu(2+), zinc Zn(2+), manganese Mn(2+), calcium Ca(2+) and cobalt Co(2+). In terms of biological role, essential for plant growth, promotes cell division in root meristems. Catalyzes the biosynthesis of ceramide sphingolipids with C(16) to C(28) fatty acids, structural membrane lipids involved in membrane trafficking (e.g. early endosomes) and cell polarity (e.g. polar auxin transport related proteins); active on a broad substrate spectrum, both regarding chain lengths of fatty acids and the sphingoid base, such as long-chain base (LCB) phytosphingosine (t18:0). Mediates resistance to sphinganine-analog mycotoxins (SAMs, e.g. fumonisin B(1)) by restoring the sphingolipid biosynthesis. Could salvage the transport of GPI-anchored proteins from the endoplasmic reticulum to the Golgi apparatus in ceramides-depleted cells after SAM exposure. Contributes to hypoxic conditions tolerance (e.g. submergences), especially in the dark, by promoting the formation of very-long-chain (VLC) ceramide species (22:1, 24:1 and 26:1) and of VLC unsaturated ceramides, which are modulating CTR1-mediated ethylene signaling leading to endoplasmic reticulum (ER)-to-nucleus translocation of EIN2 and EIN3. The chain is Ceramide synthase 1 LOH3 from Arabidopsis thaliana (Mouse-ear cress).